The following is a 30-amino-acid chain: U-actitoxin-Bcg2a (30 aa).

C7 and C27 form a disulfide bridge.

Its subcellular location is the secreted. It is found in the nematocyst. In terms of biological role, possible voltage-gated potassium channel (Kv) blocker. This chain is U-actitoxin-Bcg2a, found in Bunodosoma cangicum (Sea anemone).